Reading from the N-terminus, the 544-residue chain is Chromatin assembly factor 1 subunit A (544 aa).

The segment covering 1-22 (MNSESVDSDVAASTSNKGNELC) has biased composition (polar residues). Disordered stretches follow at residues 1 to 52 (MNSE…EADE), 67 to 117 (IYNG…REQE), and 138 to 160 (QEQQRRKEERDQKLREKEEAQRL). The segment covering 23–35 (SSSTDITSLSVSS) has biased composition (low complexity). A compositionally biased stretch (polar residues) spans 36–47 (PNESVIHSSHSA). The interval 56–170 (KLSYEGNRKK…RQEQILNKER (115 aa)) is interaction with DNA and pcn1/PCNA. Basic and acidic residues predominate over residues 74–117 (AGKEKKLQKQRAQEERIRQKEAERLKREKERQQREQEKKLREQE). Positions 76 to 176 (KEKKLQKQRA…NKERQQLKLN (101 aa)) form a coiled coil. Positions 172–179 (QLKLNNFF) match the PCNA-interaction protein (PIP box) motif. The interaction with histones H3/H4 stretch occupies residues 325–396 (SNVLLNPWLE…DKDSVNASNT (72 aa)). Residues 351 to 388 (DEEDDGEDLESEDEEVDNSDDIVEDGDNAFVDDEDDDK) show a composition bias toward acidic residues. Positions 351–400 (DEEDDGEDLESEDEEVDNSDDIVEDGDNAFVDDEDDDKDSVNASNTHRSS) are disordered.

The protein belongs to the RLF2 family. Component of chromatin assembly factor 1 (CAF-1), composed of pcf1, pcf2 and pcf3. Interacts (via PIP motif) with pcn1/PCNA; the interaction is direct and occurs during S-phase. Interacts with swi6 at the G1/S-phase transition and early S-phase, but not in the G2 phase. The CAF-1 complex interacts with histone H3/H4 dimers.

Its subcellular location is the nucleus. In terms of biological role, acts as a component of the histone chaperone complex chromatin assembly factor 1 (CAF-1), which assembles histone octamers onto DNA during replication and repair. CAF-1 performs the first step of the nucleosome assembly process, bringing newly synthesized histones H3 and H4 to replicating DNA; histones H2A/H2B can bind to this chromatin precursor subsequent to DNA replication to complete the histone octamer. Plays a role in the maintenance of heterochromatin. The sequence is that of Chromatin assembly factor 1 subunit A from Schizosaccharomyces pombe (strain 972 / ATCC 24843) (Fission yeast).